Reading from the N-terminus, the 489-residue chain is Cobyric acid synthase (489 aa).

The GATase cobBQ-type domain occupies 251 to 439 (RLTVVAPVYP…LHGLFDTPAA (189 aa)). Cys332 serves as the catalytic Nucleophile. His431 is an active-site residue.

This sequence belongs to the CobB/CobQ family. CobQ subfamily.

It functions in the pathway cofactor biosynthesis; adenosylcobalamin biosynthesis. In terms of biological role, catalyzes amidations at positions B, D, E, and G on adenosylcobyrinic A,C-diamide. NH(2) groups are provided by glutamine, and one molecule of ATP is hydrogenolyzed for each amidation. This Aromatoleum aromaticum (strain DSM 19018 / LMG 30748 / EbN1) (Azoarcus sp. (strain EbN1)) protein is Cobyric acid synthase.